Consider the following 167-residue polypeptide: Putative peroxiredoxin-B (167 aa).

The Thioredoxin domain occupies 4–167 (IKRGDRFPTT…STAQKIIAKL (164 aa)). C53 acts as the Cysteine sulfenic acid (-SOH) intermediate in catalysis. A Microbody targeting signal motif is present at residues 165–167 (AKL).

Belongs to the peroxiredoxin family. Prx5 subfamily.

It is found in the peroxisome membrane. The catalysed reaction is a hydroperoxide + [thioredoxin]-dithiol = an alcohol + [thioredoxin]-disulfide + H2O. Its function is as follows. Thiol-specific peroxidase that catalyzes the reduction of hydrogen peroxide and organic hydroperoxides to water and alcohols, respectively. Plays a role in cell protection against oxidative stress by detoxifying peroxides and as sensor of hydrogen peroxide-mediated signaling events. The protein is Putative peroxiredoxin-B (PMPB) of Candida boidinii (Yeast).